The following is a 51-amino-acid chain: uncharacterized protein (51 aa).

A coiled-coil region spans residues 3–30 (EEKAVSLAKEIIELDIKRDEMLETFMQL).

This is an uncharacterized protein from Bacillus subtilis (strain 168).